A 188-amino-acid polypeptide reads, in one-letter code: UPF0301 protein PsycPRwf_0144 (188 aa).

This sequence belongs to the UPF0301 (AlgH) family.

The chain is UPF0301 protein PsycPRwf_0144 from Psychrobacter sp. (strain PRwf-1).